Reading from the N-terminus, the 357-residue chain is DNA primase small subunit PriS (357 aa).

Active-site residues include Asp-105, Asp-107, and Asp-259.

It belongs to the eukaryotic-type primase small subunit family. In terms of assembly, heterodimer of a small subunit (PriS) and a large subunit (PriL). Requires Mg(2+) as cofactor. Mn(2+) is required as a cofactor.

Functionally, catalytic subunit of DNA primase, an RNA polymerase that catalyzes the synthesis of short RNA molecules used as primers for DNA polymerase during DNA replication. The small subunit contains the primase catalytic core and has DNA synthesis activity on its own. Binding to the large subunit stabilizes and modulates the activity, increasing the rate of DNA synthesis while decreasing the length of the DNA fragments, and conferring RNA synthesis capability. The DNA polymerase activity may enable DNA primase to also catalyze primer extension after primer synthesis. May also play a role in DNA repair. The sequence is that of DNA primase small subunit PriS from Methanococcus maripaludis (strain C5 / ATCC BAA-1333).